The primary structure comprises 129 residues: Lysozyme C (129 aa).

The 129-residue stretch at K1 to L129 folds into the C-type lysozyme domain. Intrachain disulfides connect C6/C127, C30/C115, C64/C80, and C76/C94. Catalysis depends on residues E35 and D52.

This sequence belongs to the glycosyl hydrolase 22 family. Monomer.

The protein resides in the secreted. It catalyses the reaction Hydrolysis of (1-&gt;4)-beta-linkages between N-acetylmuramic acid and N-acetyl-D-glucosamine residues in a peptidoglycan and between N-acetyl-D-glucosamine residues in chitodextrins.. Functionally, lysozymes have primarily a bacteriolytic function; those in tissues and body fluids are associated with the monocyte-macrophage system and enhance the activity of immunoagents. This chain is Lysozyme C (LYZ), found in Syrmaticus reevesii (Reeves's pheasant).